A 396-amino-acid chain; its full sequence is Transcription factor E2FC (396 aa).

Residues proline 34 to phenylalanine 48 show a composition bias toward polar residues. Residues proline 34–serine 57 are disordered. The DNA-binding element occupies arginine 155–glycine 220. Positions glutamine 226–aspartate 268 form a coiled coil. The segment at leucine 236 to leucine 264 is leucine-zipper. A retinoblastoma protein binding region spans residues aspartate 376–tryptophan 391.

This sequence belongs to the E2F/DP family. As to quaternary structure, heterodimer with DP proteins. Interacts preferentially with DPB, but also with DPA. No interaction with DPB when phosphorylated. Interacts with SKP2A, CDKA-1 and maize retinoblastoma-related protein RBR1. Component of a DREAM-like complex which modulates a variety of developmentally regulated genes and of the mitotic genes in proliferating and differentiated cells. Interacts with MYB3R3 at later stages of leaves development. Phosphorylated by cyclin-dependent kinase. Phosphorylation is necessary to target E2FC for proteolysis. Expressed in meristematic areas, vascular tissues, apical part of the roots, cotyledons, upper region of the hypocotyls, trichomes, young flower buds and pollen grains.

The protein localises to the cytoplasm. In terms of biological role, involved in transcriptional repression. May act by repressing E2F-regulated genes in mature differentiated cells, but is not an antagonist of E2FA. Restricts cell division and is involved in the coordination between cell proliferation and endoreduplication during development. May play a role during the transition from skotomorphogenesis to photomorphogenesis. Regulated by phosphorylation-dependent proteolysis via the protein-ubiquitin ligase SCF(SKP2A) complex. This is Transcription factor E2FC (E2FC) from Arabidopsis thaliana (Mouse-ear cress).